A 210-amino-acid chain; its full sequence is Late histone H1 (210 aa).

Disordered regions lie at residues 1–21 (MSAAKPKTAKKARAAPAHPPT) and 86–210 (SFKL…AAKK). Positions 17 to 91 (AHPPTSQMVV…GASGSFKLGK (75 aa)) constitute an H15 domain. The span at 104–113 (AAAKKAKLAA) shows a compositional bias: basic residues. Positions 114–123 (KKKEQKEKKA) are enriched in basic and acidic residues. The span at 124 to 210 (AKTKARKEKL…KPAAKKAAKK (87 aa)) shows a compositional bias: basic residues.

The protein belongs to the histone H1/H5 family.

The protein localises to the nucleus. Its subcellular location is the chromosome. Functionally, histones H1 are necessary for the condensation of nucleosome chains into higher-order structures. In Lytechinus pictus (Painted sea urchin), this protein is Late histone H1.